A 647-amino-acid polypeptide reads, in one-letter code: TNFAIP3-interacting protein 1 (647 aa).

Positions Met-39 to Leu-72 form a coiled coil. A compositionally biased stretch (basic and acidic residues) spans Gln-61 to Glu-71. Positions Gln-61 to Ser-168 are disordered. Residue Ser-77 is modified to Phosphoserine. The interval Thr-95 to Gln-425 is interaction with Nef. A compositionally biased stretch (low complexity) spans Ala-102–Thr-115. Positions Glu-143–Thr-155 are enriched in polar residues. Residues Ser-209–Lys-270 adopt a coiled-coil conformation. 3 positions are modified to phosphoserine: Ser-297, Ser-416, and Ser-455. Residues Ala-311 to Glu-551 adopt a coiled-coil conformation. A required for inhibitory activity of TNF-induced NF-kappa-B activation region spans residues Ala-444–Ser-601. Residues Lys-465–Thr-523 form a ubiquitin-binding domain (UBD) region. Positions Gln-537–Ala-543 match the Nuclear localization signal motif. At Tyr-565 the chain carries Phosphotyrosine. The residue at position 584 (Arg-584) is an Asymmetric dimethylarginine. Arg-612 is subject to Asymmetric dimethylarginine; alternate. Arg-612 is subject to Omega-N-methylarginine; alternate. The segment at Pro-613 to Gln-647 is disordered. Positions Glu-637–Gln-647 are enriched in acidic residues. Position 638 is a phosphoserine (Ser-638).

Interacts with TNFAIP3 and IKBKG (polyubiquitinated); facilitates TNFAIP3-mediated de-ubiquitination of NEMO/IKBKG. Interacts with polyubiquitin. Interacts with MAPK1, SELPLG and PIK3CD. Interacts with IRAK1 (polyubiquitinated). Interacts with MYD88; the interaction is indicative for participation in an activated TLR-signaling complex. Interacts with TAX1BP1. Post-translationally, phosphorylation at Tyr-565 by SRC-family kinases recruits phosphoinositide-3-kinase (PI3K) PIK3CD:p85 heterodimer which results in integrin activation and leukocyte adhesion to activated endothelium during inflammation. As to expression, ubiquitous. Abundant in heart and skeletal muscle and expressed at lower levels in thymus, liver, kidney, brain and intestinal tract.

The protein localises to the cytoplasm. Its subcellular location is the nucleus. Its function is as follows. Inhibits NF-kappa-B activation and TNF-induced NF-kappa-B-dependent gene expression by regulating TAX1BP1 and A20/TNFAIP3-mediated deubiquitination of IKBKG; proposed to link A20/TNFAIP3 to ubiquitinated IKBKG. Involved in regulation of EGF-induced ERK1/ERK2 signaling pathway; blocks MAPK3/MAPK1 nuclear translocation and MAPK1-dependent transcription. Increases cell surface CD4(T4) antigen expression. Involved in the anti-inflammatory response of macrophages and positively regulates TLR-induced activation of CEBPB. Involved in the prevention of autoimmunity; this function implicates binding to polyubiquitin. Involved in leukocyte integrin activation during inflammation; this function is mediated by association with SELPLG and dependent on phosphorylation by SRC-family kinases. The polypeptide is TNFAIP3-interacting protein 1 (Tnip1) (Mus musculus (Mouse)).